Here is a 182-residue protein sequence, read N- to C-terminus: Putative manganese efflux pump MntP (182 aa).

The next 6 membrane-spanning stretches (helical) occupy residues 6-26 (LIPLIIMAFALGMDAFSVSLG), 37-57 (ILYIGMTIGIFHIIMPFIGMV), 71-91 (HFAGAILLIGLGFYIVYSTIL), 101-121 (IGISLFVFAFGVSIDSFSVGL), 131-151 (IITILLFGFVSMLLAWIGLLI), and 162-182 (YGEIVGGIILVGFGLYILFPI).

The protein belongs to the MntP (TC 9.B.29) family.

It localises to the cell membrane. Probably functions as a manganese efflux pump. The sequence is that of Putative manganese efflux pump MntP from Bacillus cereus (strain G9842).